Reading from the N-terminus, the 157-residue chain is Ribosomal RNA large subunit methyltransferase H (157 aa).

Residues glycine 104 and 123 to 128 each bind S-adenosyl-L-methionine; that span reads LSSLTL.

Belongs to the RNA methyltransferase RlmH family. Homodimer.

It localises to the cytoplasm. It catalyses the reaction pseudouridine(1915) in 23S rRNA + S-adenosyl-L-methionine = N(3)-methylpseudouridine(1915) in 23S rRNA + S-adenosyl-L-homocysteine + H(+). Its function is as follows. Specifically methylates the pseudouridine at position 1915 (m3Psi1915) in 23S rRNA. In Nitrosococcus oceani (strain ATCC 19707 / BCRC 17464 / JCM 30415 / NCIMB 11848 / C-107), this protein is Ribosomal RNA large subunit methyltransferase H.